Consider the following 241-residue polypeptide: GLIPR1-like protein 1 (241 aa).

A signal peptide spans 1-22; sequence MILRKKLSYLWTLGLCLVASKS. An SCP domain is found at 39 to 172; sequence LRLHNEARTN…PDSALLVCNY (134 aa). A lipid anchor (GPI-anchor amidated serine) is attached at serine 220. Positions 221-241 are cleaved as a propeptide — removed in mature form; that stretch reads GTRQLIACNPLYLISVLLTIF.

Belongs to the CRISP family. Part of a oolemmal binding multimeric complex (IZUMO1 complex) composed at least of IZUMO1 and GLIPR1L1; the complex assemblage is influenced by the maturation status of the male germ cell. Interacts with IZUMO1. Post-translationally, N-glycosylated. N-glycosylation decreases during the transit in the caput. In terms of tissue distribution, highly expressed in testis, where it localizes to round and elongating spermatids and differentiated spermatozoa in the seminiferous tubules and epididymis (at protein level).

It is found in the cytoplasmic vesicle. It localises to the secretory vesicle. The protein localises to the acrosome. Its subcellular location is the cell membrane. The protein resides in the membrane raft. Required for optimal fertilization at the stage of sperm-oocyte fusion, plays a role in optimizing acrosome function, the translocation of IZUMO1 during the acrosome reaction and the fertilization process. Component of epididymosomes, one type of membranous microvesicules which mediate the transfer of lipids and proteins to spermatozoa plasma membrane during epididymal maturation. Also a component of the CD9-positive microvesicules found in the cauda region. The polypeptide is GLIPR1-like protein 1 (Bos taurus (Bovine)).